A 55-amino-acid polypeptide reads, in one-letter code: Large ribosomal subunit protein bL33 (55 aa).

The protein belongs to the bacterial ribosomal protein bL33 family.

The chain is Large ribosomal subunit protein bL33 from Jannaschia sp. (strain CCS1).